The sequence spans 249 residues: tRNA (guanine-N(1)-)-methyltransferase (249 aa).

S-adenosyl-L-methionine-binding positions include Gly-113 and 133-138; that span reads IGDFVV.

This sequence belongs to the RNA methyltransferase TrmD family. As to quaternary structure, homodimer.

It localises to the cytoplasm. It carries out the reaction guanosine(37) in tRNA + S-adenosyl-L-methionine = N(1)-methylguanosine(37) in tRNA + S-adenosyl-L-homocysteine + H(+). Specifically methylates guanosine-37 in various tRNAs. This is tRNA (guanine-N(1)-)-methyltransferase from Neisseria meningitidis serogroup C (strain 053442).